Reading from the N-terminus, the 175-residue chain is Deoxyuridine 5'-triphosphate nucleotidohydrolase (175 aa).

Substrate contacts are provided by residues 67–69 (RSG), Asn-80, 84–86 (TVD), and Lys-94. The tract at residues 138-175 (RAEGGFGSTGGHAAVGADTNGQQGGNRYASVVSDRKGQ) is disordered.

Belongs to the dUTPase family. Requires Mg(2+) as cofactor.

The enzyme catalyses dUTP + H2O = dUMP + diphosphate + H(+). It participates in pyrimidine metabolism; dUMP biosynthesis; dUMP from dCTP (dUTP route): step 2/2. Its function is as follows. This enzyme is involved in nucleotide metabolism: it produces dUMP, the immediate precursor of thymidine nucleotides and it decreases the intracellular concentration of dUTP so that uracil cannot be incorporated into DNA. The sequence is that of Deoxyuridine 5'-triphosphate nucleotidohydrolase from Streptomyces avermitilis (strain ATCC 31267 / DSM 46492 / JCM 5070 / NBRC 14893 / NCIMB 12804 / NRRL 8165 / MA-4680).